A 432-amino-acid polypeptide reads, in one-letter code: Enolase (432 aa).

(2R)-2-phosphoglycerate is bound at residue glutamine 167. The active-site Proton donor is glutamate 209. Aspartate 246, glutamate 290, and aspartate 317 together coordinate Mg(2+). Residues lysine 342, arginine 371, serine 372, and lysine 393 each contribute to the (2R)-2-phosphoglycerate site. Lysine 342 (proton acceptor) is an active-site residue.

It belongs to the enolase family. In terms of assembly, component of the RNA degradosome, a multiprotein complex involved in RNA processing and mRNA degradation. Mg(2+) serves as cofactor.

Its subcellular location is the cytoplasm. It localises to the secreted. The protein resides in the cell surface. It carries out the reaction (2R)-2-phosphoglycerate = phosphoenolpyruvate + H2O. The protein operates within carbohydrate degradation; glycolysis; pyruvate from D-glyceraldehyde 3-phosphate: step 4/5. In terms of biological role, catalyzes the reversible conversion of 2-phosphoglycerate (2-PG) into phosphoenolpyruvate (PEP). It is essential for the degradation of carbohydrates via glycolysis. The sequence is that of Enolase from Escherichia coli O139:H28 (strain E24377A / ETEC).